A 651-amino-acid polypeptide reads, in one-letter code: DNA endonuclease RBBP8 (651 aa).

2 coiled-coil regions span residues 35-84 (LQEL…EDRL) and 117-138 (ISEL…SLEL). Disordered stretches follow at residues 138–199 (LERL…PESR), 363–433 (NGRL…EHQA), and 487–539 (YESC…SDKS). Over residues 363 to 379 (NGRLQSKNQETSEIETT) the composition is skewed to polar residues. Basic and acidic residues predominate over residues 380 to 391 (QDSKKKCLDGHT). The segment covering 503-515 (VYEEEREEDDPEE) has biased composition (acidic residues). Over residues 525–539 (RPADRKPLVSDSDKS) the composition is skewed to basic and acidic residues. Threonine 599 and threonine 611 each carry phosphothreonine.

This sequence belongs to the COM1/SAE2/CtIP family. Homotetramer; formed by antiparallel association of helical extensions protruding from the N-termini of two parallel coiled-coil dimers. Interacts with the MRN complex; the interaction links DNA sensing to resection. Interacts with samhd1. In terms of processing, phosphorylation at Thr-599 and Thr-611 promote interaction with nbn and recruitment to double-strand breaks (DSBs).

The protein resides in the nucleus. Its subcellular location is the chromosome. Its function is as follows. Endonuclease that cooperates with the MRE11-RAD50-NBN (MRN) complex in DNA-end resection, the first step of double-strand break (DSB) repair through the homologous recombination (HR) pathway. Functions downstream of the MRN complex and ATM, promotes ATR activation and its recruitment to DSBs in the S/G2 phase facilitating the generation of ssDNA. Specifically promotes the endonuclease activity of the MRN complex to clear DNA ends containing protein adducts: recruited to DSBs by nbn following phosphorylation, and promotes the endonuclease of mre11 to clear protein-DNA adducts and generate clean double-strand break ends. The protein is DNA endonuclease RBBP8 (rbbp8) of Danio rerio (Zebrafish).